The following is a 239-amino-acid chain: SH3 domain-binding glutamic acid-rich protein (239 aa).

The SH3-binding motif lies at 124-130; the sequence is NGIPLPP. Positions 159 to 239 are disordered; the sequence is GLAPPPDSKG…GEEPGEDEDS (81 aa). Residues 167-185 are compositionally biased toward basic and acidic residues; the sequence is KGSEKAEEGGETEAQKEGS. Residues 198–239 show a composition bias toward acidic residues; it reads NEEEGETATEETEEIAMEGAEGEAEEEEETAEGEEPGEDEDS.

Belongs to the SH3BGR family. In terms of tissue distribution, expressed in heart and skeletal muscle.

This is SH3 domain-binding glutamic acid-rich protein (SH3BGR) from Homo sapiens (Human).